Here is a 373-residue protein sequence, read N- to C-terminus: Queuine tRNA-ribosyltransferase (373 aa).

The Proton acceptor role is filled by Asp94. Residues 94–98 (DSGGF), Asp148, Gln190, and Gly217 each bind substrate. The tract at residues 248–254 (GVGSPDC) is RNA binding. Residue Asp267 is the Nucleophile of the active site. The interval 272–276 (TRIAR) is RNA binding; important for wobble base 34 recognition. Residues Cys305, Cys307, Cys310, and His336 each coordinate Zn(2+).

This sequence belongs to the queuine tRNA-ribosyltransferase family. Homodimer. Within each dimer, one monomer is responsible for RNA recognition and catalysis, while the other monomer binds to the replacement base PreQ1. Requires Zn(2+) as cofactor.

It catalyses the reaction 7-aminomethyl-7-carbaguanine + guanosine(34) in tRNA = 7-aminomethyl-7-carbaguanosine(34) in tRNA + guanine. It functions in the pathway tRNA modification; tRNA-queuosine biosynthesis. Functionally, catalyzes the base-exchange of a guanine (G) residue with the queuine precursor 7-aminomethyl-7-deazaguanine (PreQ1) at position 34 (anticodon wobble position) in tRNAs with GU(N) anticodons (tRNA-Asp, -Asn, -His and -Tyr). Catalysis occurs through a double-displacement mechanism. The nucleophile active site attacks the C1' of nucleotide 34 to detach the guanine base from the RNA, forming a covalent enzyme-RNA intermediate. The proton acceptor active site deprotonates the incoming PreQ1, allowing a nucleophilic attack on the C1' of the ribose to form the product. After dissociation, two additional enzymatic reactions on the tRNA convert PreQ1 to queuine (Q), resulting in the hypermodified nucleoside queuosine (7-(((4,5-cis-dihydroxy-2-cyclopenten-1-yl)amino)methyl)-7-deazaguanosine). The polypeptide is Queuine tRNA-ribosyltransferase (Moorella thermoacetica (strain ATCC 39073 / JCM 9320)).